We begin with the raw amino-acid sequence, 620 residues long: uncharacterized protein (620 aa).

It belongs to the chlamydial CPn_0512/CT_425/TC_0708 family.

This is an uncharacterized protein from Chlamydia pneumoniae (Chlamydophila pneumoniae).